The following is a 338-amino-acid chain: Ketol-acid reductoisomerase (NADP(+)) (338 aa).

A KARI N-terminal Rossmann domain is found at 1–181 (MNVYYDKDCD…GGGRSGIIET (181 aa)). Residues 24 to 27 (YGSQ), Arg-47, Ser-50, Ser-52, and 82 to 85 (DEFQ) each bind NADP(+). His-107 is an active-site residue. Gly-133 contributes to the NADP(+) binding site. One can recognise a KARI C-terminal knotted domain in the interval 182–327 (TFKDETETDL…AKLRSMMPWI (146 aa)). 4 residues coordinate Mg(2+): Asp-190, Glu-194, Glu-226, and Glu-230. Ser-251 contacts substrate.

Belongs to the ketol-acid reductoisomerase family. Mg(2+) serves as cofactor.

The catalysed reaction is (2R)-2,3-dihydroxy-3-methylbutanoate + NADP(+) = (2S)-2-acetolactate + NADPH + H(+). The enzyme catalyses (2R,3R)-2,3-dihydroxy-3-methylpentanoate + NADP(+) = (S)-2-ethyl-2-hydroxy-3-oxobutanoate + NADPH + H(+). It participates in amino-acid biosynthesis; L-isoleucine biosynthesis; L-isoleucine from 2-oxobutanoate: step 2/4. The protein operates within amino-acid biosynthesis; L-valine biosynthesis; L-valine from pyruvate: step 2/4. Involved in the biosynthesis of branched-chain amino acids (BCAA). Catalyzes an alkyl-migration followed by a ketol-acid reduction of (S)-2-acetolactate (S2AL) to yield (R)-2,3-dihydroxy-isovalerate. In the isomerase reaction, S2AL is rearranged via a Mg-dependent methyl migration to produce 3-hydroxy-3-methyl-2-ketobutyrate (HMKB). In the reductase reaction, this 2-ketoacid undergoes a metal-dependent reduction by NADPH to yield (R)-2,3-dihydroxy-isovalerate. The sequence is that of Ketol-acid reductoisomerase (NADP(+)) from Psychrobacter sp. (strain PRwf-1).